Reading from the N-terminus, the 585-residue chain is A-type ATP synthase subunit A (585 aa).

231–238 contacts ATP; that stretch reads GPFGSGKT.

This sequence belongs to the ATPase alpha/beta chains family. In terms of assembly, has multiple subunits with at least A(3), B(3), C, D, E, F, H, I and proteolipid K(x).

It is found in the cell membrane. The enzyme catalyses ATP + H2O + 4 H(+)(in) = ADP + phosphate + 5 H(+)(out). Functionally, component of the A-type ATP synthase that produces ATP from ADP in the presence of a proton gradient across the membrane. The A chain is the catalytic subunit. This Thermococcus sibiricus (strain DSM 12597 / MM 739) protein is A-type ATP synthase subunit A.